A 472-amino-acid polypeptide reads, in one-letter code: Violaxanthin de-epoxidase, chloroplastic (472 aa).

6 disulfide bridges follow: cysteine 133-cysteine 151, cysteine 138-cysteine 145, cysteine 157-cysteine 174, cysteine 161-cysteine 170, cysteine 189-cysteine 196, and cysteine 242-cysteine 372. A coiled-coil region spans residues 379 to 462 (VERLEKTVEE…MEAGEVEKLF (84 aa)).

This sequence belongs to the calycin superfamily. Lipocalin family. Post-translationally, disulfide bonds. Reduction of the disulfides results in loss of a rigid structure, a decrease in thermal stability of 15 degrees Celsius and a loss of activity.

It localises to the plastid. The protein resides in the chloroplast thylakoid membrane. It carries out the reaction all-trans-violaxanthin + 2 L-ascorbate = all-trans-zeaxanthin + 2 L-dehydroascorbate + 2 H2O. Its activity is regulated as follows. Irreversibly inhibited by DTT and iodoacetamide at pH 5.7 or pH 5.2, but not at pH 7.2. Regulated through Ca(2+) gating of H(+) flux at the CFoH(+) channel. Requires the presence of lipids forming reverse hexagonal structures such as monogalactosyldiacylglyceride (MGDG) or phosphatidylethanolamine. A negative curvature elastic stress in the thylakoid lipid bilayer is required for VDE1 activity. Part of the xanthophyll (or violaxanthin) cycle for controlling the concentration of zeaxanthin in chloroplasts. Catalyzes the two-step mono de-epoxidation reaction. Stereospecific for all-trans xanthophylls. Zeaxanthin induces the dissipation of excitation energy in the chlorophyll of the light-harvesting protein complex of photosystem II. This is Violaxanthin de-epoxidase, chloroplastic from Spinacia oleracea (Spinach).